A 416-amino-acid chain; its full sequence is Glutamyl-tRNA reductase (416 aa).

Substrate-binding positions include 50–53, S109, 114–116, and Q120; these read TCNR and EPQ. The Nucleophile role is filled by C51. 189–194 serves as a coordination point for NADP(+); the sequence is GAGEMI.

It belongs to the glutamyl-tRNA reductase family. As to quaternary structure, homodimer.

The enzyme catalyses (S)-4-amino-5-oxopentanoate + tRNA(Glu) + NADP(+) = L-glutamyl-tRNA(Glu) + NADPH + H(+). It functions in the pathway porphyrin-containing compound metabolism; protoporphyrin-IX biosynthesis; 5-aminolevulinate from L-glutamyl-tRNA(Glu): step 1/2. Its function is as follows. Catalyzes the NADPH-dependent reduction of glutamyl-tRNA(Glu) to glutamate 1-semialdehyde (GSA). The protein is Glutamyl-tRNA reductase of Ruthia magnifica subsp. Calyptogena magnifica.